A 221-amino-acid polypeptide reads, in one-letter code: uncharacterized protein (221 aa).

This is an uncharacterized protein from Methanocaldococcus jannaschii (strain ATCC 43067 / DSM 2661 / JAL-1 / JCM 10045 / NBRC 100440) (Methanococcus jannaschii).